Reading from the N-terminus, the 128-residue chain is Holo-[acyl-carrier-protein] synthase (128 aa).

2 residues coordinate Mg(2+): D8 and E59.

The protein belongs to the P-Pant transferase superfamily. AcpS family. Requires Mg(2+) as cofactor.

It is found in the cytoplasm. The enzyme catalyses apo-[ACP] + CoA = holo-[ACP] + adenosine 3',5'-bisphosphate + H(+). Functionally, transfers the 4'-phosphopantetheine moiety from coenzyme A to a Ser of acyl-carrier-protein. This chain is Holo-[acyl-carrier-protein] synthase, found in Rickettsia typhi (strain ATCC VR-144 / Wilmington).